The following is a 279-amino-acid chain: Movement protein (279 aa).

The protein belongs to the cucumovirus movement protein family.

Its subcellular location is the host cell junction. The protein localises to the host plasmodesma. Its function is as follows. Transports viral genome to neighboring plant cells directly through plasmosdesmata, without any budding. The movement protein allows efficient cell to cell propagation, by bypassing the host cell wall barrier. Acts by forming a tubular structure at the host plasmodesmata, enlarging it enough to allow free passage of virion capsids. The sequence is that of Movement protein from Cucumber mosaic virus (strain Kin) (CMV).